The primary structure comprises 133 residues: uncharacterized protein (133 aa).

The next 4 helical transmembrane spans lie at 5–27 (KLFF…FSLI), 42–64 (IAWN…YSLY), 77–99 (ALIS…TFSS), and 103–125 (LVWW…LLLK).

It is found in the cell membrane. This is an uncharacterized protein from Bacillus subtilis (strain 168).